Consider the following 446-residue polypeptide: Tubulin alpha chain-like 3 (446 aa).

Residues 1–4 (MREC) carry the MREC motif motif. GTP contacts are provided by Q11, E78, S147, G151, T152, T186, N213, and N235. E78 lines the Mg(2+) pocket. E261 is a catalytic residue.

It belongs to the tubulin family. In terms of assembly, dimer of alpha and beta chains. A typical microtubule is a hollow water-filled tube with an outer diameter of 25 nm and an inner diameter of 15 nM. Alpha-beta heterodimers associate head-to-tail to form protofilaments running lengthwise along the microtubule wall with the beta-tubulin subunit facing the microtubule plus end conferring a structural polarity. Microtubules usually have 13 protofilaments but different protofilament numbers can be found in some organisms and specialized cells. Mg(2+) serves as cofactor. In terms of processing, some glutamate residues at the C-terminus are polyglycylated, resulting in polyglycine chains on the gamma-carboxyl group. Glycylation is mainly limited to tubulin incorporated into axonemes (cilia and flagella) whereas glutamylation is prevalent in neuronal cells, centrioles, axonemes, and the mitotic spindle. Both modifications can coexist on the same protein on adjacent residues, and lowering polyglycylation levels increases polyglutamylation, and reciprocally. Cilia and flagella glycylation is required for their stability and maintenance. Flagella glycylation controls sperm motility. Post-translationally, some glutamate residues at the C-terminus are polyglutamylated, resulting in polyglutamate chains on the gamma-carboxyl group. Polyglutamylation plays a key role in microtubule severing by spastin (SPAST). SPAST preferentially recognizes and acts on microtubules decorated with short polyglutamate tails: severing activity by SPAST increases as the number of glutamates per tubulin rises from one to eight, but decreases beyond this glutamylation threshold. Glutamylation is also involved in cilia motility.

The protein resides in the cytoplasm. The protein localises to the cytoskeleton. It carries out the reaction GTP + H2O = GDP + phosphate + H(+). Its function is as follows. Tubulin is the major constituent of microtubules, a cylinder consisting of laterally associated linear protofilaments composed of alpha- and beta-tubulin heterodimers. Microtubules grow by the addition of GTP-tubulin dimers to the microtubule end, where a stabilizing cap forms. Below the cap, tubulin dimers are in GDP-bound state, owing to GTPase activity of alpha-tubulin. The chain is Tubulin alpha chain-like 3 (Tubal3) from Mus musculus (Mouse).